Reading from the N-terminus, the 360-residue chain is Phospho-N-acetylmuramoyl-pentapeptide-transferase (360 aa).

10 consecutive transmembrane segments (helical) span residues 26 to 46 (TILG…AVIQ), 70 to 90 (GTPT…TLLW), 97 to 117 (YVWV…VDDY), 132 to 152 (AKFF…FSTA), 168 to 188 (VVLP…VGSS), 199 to 219 (GLAI…AYAT), 236 to 256 (AGEV…FLWF), 263 to 283 (VFMG…LAVV), 288 to 308 (LVLL…MLQV), and 338 to 358 (VIVR…AMLK).

This sequence belongs to the glycosyltransferase 4 family. MraY subfamily. Mg(2+) serves as cofactor.

It is found in the cell inner membrane. The catalysed reaction is UDP-N-acetyl-alpha-D-muramoyl-L-alanyl-gamma-D-glutamyl-meso-2,6-diaminopimeloyl-D-alanyl-D-alanine + di-trans,octa-cis-undecaprenyl phosphate = di-trans,octa-cis-undecaprenyl diphospho-N-acetyl-alpha-D-muramoyl-L-alanyl-D-glutamyl-meso-2,6-diaminopimeloyl-D-alanyl-D-alanine + UMP. The protein operates within cell wall biogenesis; peptidoglycan biosynthesis. Catalyzes the initial step of the lipid cycle reactions in the biosynthesis of the cell wall peptidoglycan: transfers peptidoglycan precursor phospho-MurNAc-pentapeptide from UDP-MurNAc-pentapeptide onto the lipid carrier undecaprenyl phosphate, yielding undecaprenyl-pyrophosphoryl-MurNAc-pentapeptide, known as lipid I. The chain is Phospho-N-acetylmuramoyl-pentapeptide-transferase from Alkalilimnicola ehrlichii (strain ATCC BAA-1101 / DSM 17681 / MLHE-1).